Consider the following 407-residue polypeptide: MTRTSPRHHAPSETKRRVPMGGVHTNPGKKLTITAVAFQFFINGLVLAAWATSIPHVKNAYSFNDAELGVLLLIMAAGALLFMSLAGYFSHVFGSRRMSIQSALLFPSALVLIFAAPNCMTFLCSIVLFGAANGAMDVLMNHQAKALEENGFPRIMAFLHGCSSTGILAGIMTFGVIGDGHYVARSVTLLTGILIVARWLFPHLLDDVRSGEHRLAIGELRNCKLLMFGILSFLTMVTDGAIAEWSKLYLIRVEQVTDQVGSLGYVAFTLLMIAGRISGDRVKDAIGCRALIAISGSLASAGMTTALFMPSFAGKLAGFALLGLGMANLVPIIFSEAASMNTVSKTVGLTFVSVCGYSGFLVGPPIIGRIAEAVGLGRALLFIIAVGVIVACASVFFDRHRSGQPEP.

Positions 1 to 24 (MTRTSPRHHAPSETKRRVPMGGVH) are disordered. 11 consecutive transmembrane segments (helical) span residues 31–51 (LTIT…AAWA), 69–89 (GVLL…AGYF), 109–129 (ALVL…IVLF), 157–177 (AFLH…FGVI), 186–206 (SVTL…HLLD), 225–245 (LLMF…IAEW), 255–275 (QVTD…MIAG), 290–310 (ALIA…LFMP), 316–336 (LAGF…IFSE), 347–367 (VGLT…PPII), and 377–397 (GRAL…SVFF).

It is found in the cell membrane. Its function is as follows. May be a membrane transport protein that could either transport a precursor for rhizopine biosynthesis into bacteroids or the finished product from the bacteroids. The protein is Membrane protein MosC (mosC) of Rhizobium meliloti (Ensifer meliloti).